The primary structure comprises 195 residues: MKKYIKEQIKKSFEIKQTIYENENLINKIEEVSKLCVALYRGDKKTILAGNGGSAADAQHIAAELVGRYGFDRPSIPSLALTTDTSCLTAIGNDYGYDNVFSRQLEGMGQAGDIFIGISTSGNSKNIINAFISAKKKGITTVALVGRDGGEMAKMADVALVVPSDSTPRIQESHILIGHIICDIIEKEIFGDGVN.

One can recognise an SIS domain in the interval 35 to 195 (LCVALYRGDK…EKEIFGDGVN (161 aa)). 51 to 53 (NGG) contacts substrate. Residues histidine 60 and glutamate 64 each coordinate Zn(2+). Substrate-binding positions include glutamate 64, 93 to 94 (ND), 119 to 121 (STS), serine 124, and glutamine 171. Zn(2+) is bound by residues glutamine 171 and histidine 179.

It belongs to the SIS family. GmhA subfamily. Homotetramer. The cofactor is Zn(2+).

Its subcellular location is the cytoplasm. It carries out the reaction 2 D-sedoheptulose 7-phosphate = D-glycero-alpha-D-manno-heptose 7-phosphate + D-glycero-beta-D-manno-heptose 7-phosphate. It participates in carbohydrate biosynthesis; D-glycero-D-manno-heptose 7-phosphate biosynthesis; D-glycero-alpha-D-manno-heptose 7-phosphate and D-glycero-beta-D-manno-heptose 7-phosphate from sedoheptulose 7-phosphate: step 1/1. Catalyzes the isomerization of sedoheptulose 7-phosphate in D-glycero-D-manno-heptose 7-phosphate. This is Phosphoheptose isomerase from Sulfurimonas denitrificans (strain ATCC 33889 / DSM 1251) (Thiomicrospira denitrificans (strain ATCC 33889 / DSM 1251)).